Here is a 630-residue protein sequence, read N- to C-terminus: ATP synthase subunit alpha (630 aa).

G173–T180 lines the ATP pocket. Residues A592–K630 are disordered. Residues A599–A611 show a composition bias toward acidic residues.

Belongs to the ATPase alpha/beta chains family. In terms of assembly, F-type ATPases have 2 components, CF(1) - the catalytic core - and CF(0) - the membrane proton channel. CF(1) has five subunits: alpha(3), beta(3), gamma(1), delta(1), epsilon(1). CF(0) has three main subunits: a(1), b(2) and c(9-12). The alpha and beta chains form an alternating ring which encloses part of the gamma chain. CF(1) is attached to CF(0) by a central stalk formed by the gamma and epsilon chains, while a peripheral stalk is formed by the delta and b chains.

The protein resides in the cell inner membrane. The enzyme catalyses ATP + H2O + 4 H(+)(in) = ADP + phosphate + 5 H(+)(out). Produces ATP from ADP in the presence of a proton gradient across the membrane. The alpha chain is a regulatory subunit. The sequence is that of ATP synthase subunit alpha from Sorangium cellulosum (strain So ce56) (Polyangium cellulosum (strain So ce56)).